Consider the following 399-residue polypeptide: Ectoine hydrolase (399 aa).

It belongs to the peptidase M24 family.

The protein localises to the cytoplasm. It catalyses the reaction L-ectoine + H2O = (2S)-2-acetamido-4-aminobutanoate. Involved in the degradation of ectoine, which allows H.elongata to utilize ectoine as both a carbon and a nitrogen source for growth. Catalyzes the hydrolysis of ectoine to N-acetyl-L-2,4-diaminobutyric acid (N-Ac-DABA). It can produce both isoforms N-gamma-acetyl-L-2,4-diaminobutyric acid (N-gamma-Ac-DABA) and N-alpha-acetyl-L-2,4-diaminobutyric acid (-Nalpha-Ac-DABA), however N-alpha-Ac-DABA is the essential substrate for the subsequent catabolic enzyme DoeB. The chain is Ectoine hydrolase from Halomonas elongata (strain ATCC 33173 / DSM 2581 / NBRC 15536 / NCIMB 2198 / 1H9).